The chain runs to 259 residues: Ribosome maturation factor RimP (259 aa).

Basic and acidic residues predominate over residues arginine 186–lysine 195. Residues arginine 186–aspartate 259 are disordered. Positions lysine 239–serine 248 are enriched in basic residues.

The protein belongs to the RimP family.

The protein resides in the cytoplasm. Its function is as follows. Required for maturation of 30S ribosomal subunits. This is Ribosome maturation factor RimP from Rhodopseudomonas palustris (strain HaA2).